Consider the following 84-residue polypeptide: Antitoxin VapB30 (84 aa).

Its function is as follows. Antitoxin component of a type II toxin-antitoxin (TA) system. Upon expression in M.smegmatis neutralizes the effect of cognate toxin VapC30. The sequence is that of Antitoxin VapB30 (vapB30) from Mycobacterium tuberculosis (strain ATCC 25618 / H37Rv).